Here is a 483-residue protein sequence, read N- to C-terminus: Argininosuccinate lyase (483 aa).

It belongs to the lyase 1 family. Argininosuccinate lyase subfamily.

The protein resides in the cytoplasm. It catalyses the reaction 2-(N(omega)-L-arginino)succinate = fumarate + L-arginine. It participates in amino-acid biosynthesis; L-arginine biosynthesis; L-arginine from L-ornithine and carbamoyl phosphate: step 3/3. In Archaeoglobus fulgidus (strain ATCC 49558 / DSM 4304 / JCM 9628 / NBRC 100126 / VC-16), this protein is Argininosuccinate lyase.